The sequence spans 661 residues: Galactan 5-O-arabinofuranosyltransferase (661 aa).

13 helical membrane passes run 26–46, 64–84, 108–128, 194–214, 217–237, 243–263, 265–285, 286–306, 312–332, 362–382, 393–413, 418–438, and 458–478; these read LVAI…LWMG, VASA…WLWL, ALTY…VLAI, AFQP…VPVW, ITGS…IILA, PYAA…SRIA, GDKF…TFYT, LFTG…AAIV, PLLW…ISWG, VPFL…IYLV, MWVG…ITLL, LGFR…VLGI, and TATH…LYYA.

This sequence belongs to the glycosyltransferase 85 family.

It is found in the cell membrane. The enzyme catalyses Adds an alpha-D-arabinofuranosyl group from trans,octacis-decaprenylphospho-beta-D-arabinofuranose at the 5-O-position of the eighth, tenth and twelfth galactofuranose unit of the galactofuranan chain of [beta-D-galactofuranosyl-(1-&gt;5)-beta-D-galactofuranosyl-(1-&gt;6)]14-beta-D-galactofuranosyl-(1-&gt;5)-beta-D-galactofuranosyl-(1-&gt;4)-alpha-L-rhamnopyranosyl-(1-&gt;3)-N-acetyl-alpha-D-glucosaminyl-diphospho-trans,octacis-decaprenol.. Its pathway is cell wall biogenesis; cell wall polysaccharide biosynthesis. Its function is as follows. Involved in the biosynthesis of the arabinogalactan (AG) region of the mycolylarabinogalactan-peptidoglycan (mAGP) complex, an essential component of the cell wall. Catalyzes the addition of the first key arabinofuranosyl (Araf) residue from the sugar donor decaprenyl-phospho-arabinose (DPA) on the C-5 of a 6-linked galactofuranosyl (Galf) of the galactan domain, thus 'priming' the galactan for further elaboration by other arabinofuranosyltransferases. The polypeptide is Galactan 5-O-arabinofuranosyltransferase (Corynebacterium glutamicum (strain ATCC 13032 / DSM 20300 / JCM 1318 / BCRC 11384 / CCUG 27702 / LMG 3730 / NBRC 12168 / NCIMB 10025 / NRRL B-2784 / 534)).